Here is an 827-residue protein sequence, read N- to C-terminus: MRGCLRLALLCALPWLLLAASPGHPAKSPRQPPAPRRDPFDAARGADFDHVYSGVVNLSTENIYSFNYTSQPDQVTAVRVYVNSSSENLNYPVLVVVRQQKEVLSWQVPLLFQGLYQRSYNYQEVSRTLCPSEATNETGPLQQLIFVDVASMAPLGAQYKLLVTKLKHFQLRTNVAFHFTASPSQPQYFLYKFPKDVDSVIIKVVSEMAYPCSVVSVQNIMCPVYDLDHNVEFNGVYQSMTKKAAITLQKKDFPGEQFFVVFVIKPEDYACGGSFFIQEKENQTWNLQRKKNLEVTIVPSIKESVYVKSSLFSVFIFLSFYLGCLLVGFVHYLRFQRKSIDGSFGSNDGSGNMVASHPIAASTPEGSNYGTIDESSSSPGRQMSSSDGGPPGQSDTDSSVEESDFDTMPDIESDKNIIRTKMFLYLSDLSRKDRRIVSKKYKIYFWNIITIAVFYALPVIQLVITYQTVVNVTGNQDICYYNFLCAHPLGVLSAFNNILSNLGHVLLGFLFLLIVLRRDILHRRALEAKDIFAVEYGIPKHFGLFYAMGIALMMEGVLSACYHVCPNYSNFQFDTSFMYMIAGLCMLKLYQTRHPDINASAYSAYASFAVVIMVTVLGVVFGKNDVWFWVIFSAIHVLASLALSTQIYYMGRFKIDLGIFRRAAMVFYTDCIQQCSRPLYMDRMVLLVVGNLVNWSFALFGLIYRPRDFASYMLGIFICNLLLYLAFYIIMKLRSSEKVLPVPLFCIVATAVMWAAALYFFFQNLSSWEGTPAESREKNRECILLDFFDDHDIWHFLSATALFFSFLVLLTLDDDLDVVRRDQIPVF.

Residues 1–19 (MRGCLRLALLCALPWLLLA) form the signal peptide. Topologically, residues 20–309 (ASPGHPAKSP…SIKESVYVKS (290 aa)) are extracellular. Residues N57, N67, N83, N136, and N282 are each glycosylated (N-linked (GlcNAc...) asparagine). Residues 310–330 (SLFSVFIFLSFYLGCLLVGFV) form a helical membrane-spanning segment. The Cytoplasmic segment spans residues 331–442 (HYLRFQRKSI…DRRIVSKKYK (112 aa)). The segment at 355–408 (ASHPIAASTPEGSNYGTIDESSSSPGRQMSSSDGGPPGQSDTDSSVEESDFDTM) is disordered. Residues 364–374 (PEGSNYGTIDE) are compositionally biased toward polar residues. Residues 375 to 397 (SSSSPGRQMSSSDGGPPGQSDTD) show a composition bias toward low complexity. The span at 398–408 (SSVEESDFDTM) shows a compositional bias: acidic residues. A helical membrane pass occupies residues 443-463 (IYFWNIITIAVFYALPVIQLV). Over 464-494 (ITYQTVVNVTGNQDICYYNFLCAHPLGVLSA) the chain is Extracellular. N-linked (GlcNAc...) asparagine glycosylation occurs at N471. A helical membrane pass occupies residues 495–515 (FNNILSNLGHVLLGFLFLLIV). Over 516–541 (LRRDILHRRALEAKDIFAVEYGIPKH) the chain is Cytoplasmic. Residues 542–562 (FGLFYAMGIALMMEGVLSACY) form a helical membrane-spanning segment. Residues 563 to 572 (HVCPNYSNFQ) lie on the Extracellular side of the membrane. N567 carries an N-linked (GlcNAc...) asparagine glycan. A helical transmembrane segment spans residues 573-590 (FDTSFMYMIAGLCMLKLY). Residues 591 to 600 (QTRHPDINAS) lie on the Cytoplasmic side of the membrane. A helical transmembrane segment spans residues 601 to 621 (AYSAYASFAVVIMVTVLGVVF). The Extracellular portion of the chain corresponds to 622-626 (GKNDV). A helical transmembrane segment spans residues 627 to 647 (WFWVIFSAIHVLASLALSTQI). At 648-683 (YYMGRFKIDLGIFRRAAMVFYTDCIQQCSRPLYMDR) the chain is on the cytoplasmic side. A helical transmembrane segment spans residues 684 to 704 (MVLLVVGNLVNWSFALFGLIY). The Extracellular portion of the chain corresponds to 705 to 710 (RPRDFA). Residues 711–731 (SYMLGIFICNLLLYLAFYIIM) traverse the membrane as a helical segment. Residues 732–741 (KLRSSEKVLP) lie on the Cytoplasmic side of the membrane. A helical transmembrane segment spans residues 742-762 (VPLFCIVATAVMWAAALYFFF). At 763-791 (QNLSSWEGTPAESREKNRECILLDFFDDH) the chain is on the extracellular side. N764 is a glycosylation site (N-linked (GlcNAc...) asparagine). The helical transmembrane segment at 792–812 (DIWHFLSATALFFSFLVLLTL) threads the bilayer. The Cytoplasmic portion of the chain corresponds to 813–827 (DDDLDVVRRDQIPVF).

It belongs to the SID1 family.

Its subcellular location is the membrane. In vitro binds long double-stranded RNA (dsRNA) (500 and 700 base pairs), but not dsRNA shorter than 300 bp. Not involved in RNA autophagy, a process in which RNA is directly imported into lysosomes in an ATP-dependent manner, and degraded. This is SID1 transmembrane family member 1 (SIDT1) from Homo sapiens (Human).